Consider the following 821-residue polypeptide: Serine/threonine-protein kinase CTR1 (821 aa).

2 disordered regions span residues 1-76 and 481-502; these read MEMP…LNNQ and NPGGENDALAENGGGSLPPSAN. The segment covering 14 to 25 has biased composition (low complexity); sequence SQFSDDQVSVSV. A compositionally biased stretch (polar residues) spans 35–49; sequence SLSSENRSNHNSGNT. In terms of domain architecture, Protein kinase spans 551–809; it reads LNIKEKIGAG…TIMDLLRPLI (259 aa). Residues 557–565 and lysine 578 each bind ATP; that span reads IGAGSFGTV. Aspartate 676 serves as the catalytic Proton acceptor.

This sequence belongs to the protein kinase superfamily. TKL Ser/Thr protein kinase family. RAF subfamily. As to quaternary structure, interacts with EIN2 (via C-terminus). As to expression, expressed in both seedlings and adult plants.

It catalyses the reaction L-seryl-[protein] + ATP = O-phospho-L-seryl-[protein] + ADP + H(+). The enzyme catalyses L-threonyl-[protein] + ATP = O-phospho-L-threonyl-[protein] + ADP + H(+). With respect to regulation, kinase activity is inhibited by C24:1-ceramide during hypoxia (e.g. submergences). Acts as a negative regulator in the ethylene response pathway. Phosphorylates the cytosolic C-terminal domain of EIN2, preventing the signaling in the absence of ethylene. Interacts with C24:1-ceramide upon hypoxic conditions (e.g. submergences) to in turn regulate EIN2 endoplasmic reticulum (ER)-to-nucleus translocation and EIN3 stabilization. The protein is Serine/threonine-protein kinase CTR1 of Arabidopsis thaliana (Mouse-ear cress).